The chain runs to 434 residues: UDP-N-acetylmuramate--L-alanine ligase (434 aa).

Residue 108–114 coordinates ATP; that stretch reads GSHGKTT.

The protein belongs to the MurCDEF family.

It localises to the cytoplasm. It carries out the reaction UDP-N-acetyl-alpha-D-muramate + L-alanine + ATP = UDP-N-acetyl-alpha-D-muramoyl-L-alanine + ADP + phosphate + H(+). The protein operates within cell wall biogenesis; peptidoglycan biosynthesis. Functionally, cell wall formation. The polypeptide is UDP-N-acetylmuramate--L-alanine ligase (Geobacillus thermodenitrificans (strain NG80-2)).